The primary structure comprises 97 residues: Large ribosomal subunit protein bL28 (97 aa).

The protein belongs to the bacterial ribosomal protein bL28 family.

This chain is Large ribosomal subunit protein bL28, found in Bartonella quintana (strain Toulouse) (Rochalimaea quintana).